The primary structure comprises 132 residues: NAD(P) transhydrogenase subunit alpha part 2 (132 aa).

3 consecutive transmembrane segments (helical) span residues 43-63 (PLVF…YVVW), 72-92 (PLMS…MIAI), and 103-123 (LLGS…FIVT).

As to quaternary structure, complex of an alpha and a beta chain; in Rickettsia, the alpha chain seems to be made of two subunits.

The protein resides in the cell inner membrane. It carries out the reaction NAD(+) + NADPH + H(+)(in) = NADH + NADP(+) + H(+)(out). The transhydrogenation between NADH and NADP is coupled to respiration and ATP hydrolysis and functions as a proton pump across the membrane. The protein is NAD(P) transhydrogenase subunit alpha part 2 (pntAB) of Rickettsia prowazekii (strain Madrid E).